A 470-amino-acid polypeptide reads, in one-letter code: 3-isopropylmalate dehydratase large subunit (470 aa).

Residues Cys349, Cys409, and Cys412 each coordinate [4Fe-4S] cluster.

It belongs to the aconitase/IPM isomerase family. LeuC type 1 subfamily. In terms of assembly, heterodimer of LeuC and LeuD. [4Fe-4S] cluster is required as a cofactor.

It catalyses the reaction (2R,3S)-3-isopropylmalate = (2S)-2-isopropylmalate. The protein operates within amino-acid biosynthesis; L-leucine biosynthesis; L-leucine from 3-methyl-2-oxobutanoate: step 2/4. Its function is as follows. Catalyzes the isomerization between 2-isopropylmalate and 3-isopropylmalate, via the formation of 2-isopropylmaleate. In Afipia carboxidovorans (strain ATCC 49405 / DSM 1227 / KCTC 32145 / OM5) (Oligotropha carboxidovorans), this protein is 3-isopropylmalate dehydratase large subunit.